A 236-amino-acid polypeptide reads, in one-letter code: Biosynthetic peptidoglycan transglycosylase (236 aa).

Residues alanine 12–proline 31 traverse the membrane as a helical segment.

Belongs to the glycosyltransferase 51 family.

Its subcellular location is the cell inner membrane. It carries out the reaction [GlcNAc-(1-&gt;4)-Mur2Ac(oyl-L-Ala-gamma-D-Glu-L-Lys-D-Ala-D-Ala)](n)-di-trans,octa-cis-undecaprenyl diphosphate + beta-D-GlcNAc-(1-&gt;4)-Mur2Ac(oyl-L-Ala-gamma-D-Glu-L-Lys-D-Ala-D-Ala)-di-trans,octa-cis-undecaprenyl diphosphate = [GlcNAc-(1-&gt;4)-Mur2Ac(oyl-L-Ala-gamma-D-Glu-L-Lys-D-Ala-D-Ala)](n+1)-di-trans,octa-cis-undecaprenyl diphosphate + di-trans,octa-cis-undecaprenyl diphosphate + H(+). The protein operates within cell wall biogenesis; peptidoglycan biosynthesis. Its function is as follows. Peptidoglycan polymerase that catalyzes glycan chain elongation from lipid-linked precursors. This is Biosynthetic peptidoglycan transglycosylase from Pseudomonas putida (strain W619).